The primary structure comprises 156 residues: Pre-mRNA-splicing factor SNT309 (156 aa).

In terms of assembly, associated with the spliceosome.

It is found in the nucleus. Functionally, involved in pre-mRNA splicing. The chain is Pre-mRNA-splicing factor SNT309 (SNT309) from Candida glabrata (strain ATCC 2001 / BCRC 20586 / JCM 3761 / NBRC 0622 / NRRL Y-65 / CBS 138) (Yeast).